The primary structure comprises 265 residues: Type-1Ba cytolytic delta-endotoxin (265 aa).

This sequence belongs to the cyt1/cyt2 endotoxin family. Post-translationally, active after proteolytic processing.

Functionally, kills the larvae of dipteran insects by making pores in the epithelial cell membrane of the insect midgut. In Bacillus thuringiensis subsp. neoleoensis, this protein is Type-1Ba cytolytic delta-endotoxin (cyt1Ba1).